A 325-amino-acid polypeptide reads, in one-letter code: Tetraacyldisaccharide 4'-kinase (325 aa).

Thr55–Thr62 is a binding site for ATP.

The protein belongs to the LpxK family.

It catalyses the reaction a lipid A disaccharide + ATP = a lipid IVA + ADP + H(+). It participates in glycolipid biosynthesis; lipid IV(A) biosynthesis; lipid IV(A) from (3R)-3-hydroxytetradecanoyl-[acyl-carrier-protein] and UDP-N-acetyl-alpha-D-glucosamine: step 6/6. Its function is as follows. Transfers the gamma-phosphate of ATP to the 4'-position of a tetraacyldisaccharide 1-phosphate intermediate (termed DS-1-P) to form tetraacyldisaccharide 1,4'-bis-phosphate (lipid IVA). This is Tetraacyldisaccharide 4'-kinase from Salmonella heidelberg (strain SL476).